Consider the following 247-residue polypeptide: Synaptogyrin homolog 1 (247 aa).

One can recognise an MARVEL domain in the interval 21–175 (FFKKPTVLFR…AAFFAWRRYE (155 aa)). Transmembrane regions (helical) follow at residues 25–45 (PTVLFRCAALLFGLILWYSVS), 69–89 (CSFATAVGFFAVCGAIVLIVL), 105–125 (AVLADLVVSAIFTAIFLIGFF), and 151–171 (FGILSALLSFLAWGGAAFFAW). Positions 206 to 247 (DSTGIGHVGAPPPQSSYQSGAAPQTMQQPPSNPYTQSEGYGY) are disordered. Residues 220–247 (SSYQSGAAPQTMQQPPSNPYTQSEGYGY) show a composition bias toward polar residues.

It belongs to the synaptogyrin family. Expressed in a wide variety of neurons and is expressed weakly in the non-neuronal distal tip cells. A punctate pattern was observed in the ventral and dorsal nerve cords and the nerve ring. Weak expression is seen in neuronal cell bodies and commissures.

The protein localises to the membrane. The protein is Synaptogyrin homolog 1 (sng-1) of Caenorhabditis elegans.